A 276-amino-acid polypeptide reads, in one-letter code: Putative pyruvate, phosphate dikinase regulatory protein (276 aa).

154-161 (GVSRTSKS) provides a ligand contact to ADP.

It belongs to the pyruvate, phosphate/water dikinase regulatory protein family. PDRP subfamily.

The catalysed reaction is N(tele)-phospho-L-histidyl/L-threonyl-[pyruvate, phosphate dikinase] + ADP = N(tele)-phospho-L-histidyl/O-phospho-L-threonyl-[pyruvate, phosphate dikinase] + AMP + H(+). It carries out the reaction N(tele)-phospho-L-histidyl/O-phospho-L-threonyl-[pyruvate, phosphate dikinase] + phosphate + H(+) = N(tele)-phospho-L-histidyl/L-threonyl-[pyruvate, phosphate dikinase] + diphosphate. In terms of biological role, bifunctional serine/threonine kinase and phosphorylase involved in the regulation of the pyruvate, phosphate dikinase (PPDK) by catalyzing its phosphorylation/dephosphorylation. This is Putative pyruvate, phosphate dikinase regulatory protein from Wolbachia pipientis wMel.